Here is a 390-residue protein sequence, read N- to C-terminus: Chorismate synthase 1 (390 aa).

NADP(+)-binding residues include arginine 39 and arginine 45. Residues 95-117 (EQEEKEMKRKVTKPRPGHADLNG) form a disordered region. FMN contacts are provided by residues 132–134 (RSS), 253–254 (NA), glycine 298, 313–317 (KPIPT), and arginine 339.

This sequence belongs to the chorismate synthase family. As to quaternary structure, homotetramer. It depends on FMNH2 as a cofactor.

The catalysed reaction is 5-O-(1-carboxyvinyl)-3-phosphoshikimate = chorismate + phosphate. It participates in metabolic intermediate biosynthesis; chorismate biosynthesis; chorismate from D-erythrose 4-phosphate and phosphoenolpyruvate: step 7/7. Functionally, catalyzes the anti-1,4-elimination of the C-3 phosphate and the C-6 proR hydrogen from 5-enolpyruvylshikimate-3-phosphate (EPSP) to yield chorismate, which is the branch point compound that serves as the starting substrate for the three terminal pathways of aromatic amino acid biosynthesis. This reaction introduces a second double bond into the aromatic ring system. In Bacillus cereus (strain ATCC 10987 / NRS 248), this protein is Chorismate synthase 1.